A 585-amino-acid polypeptide reads, in one-letter code: Aspartate--tRNA ligase (585 aa).

Glu173 provides a ligand contact to L-aspartate. An aspartate region spans residues 197-200; that stretch reads QTLK. L-aspartate is bound at residue Arg219. Residues 219-221 and Gln228 contribute to the ATP site; that span reads RDE. His446 contributes to the L-aspartate binding site. Glu480 is a binding site for ATP. Arg487 lines the L-aspartate pocket. ATP is bound at residue 532–535; that stretch reads GLDR.

It belongs to the class-II aminoacyl-tRNA synthetase family. Type 1 subfamily. In terms of assembly, homodimer.

The protein localises to the cytoplasm. The enzyme catalyses tRNA(Asp) + L-aspartate + ATP = L-aspartyl-tRNA(Asp) + AMP + diphosphate. Its function is as follows. Catalyzes the attachment of L-aspartate to tRNA(Asp) in a two-step reaction: L-aspartate is first activated by ATP to form Asp-AMP and then transferred to the acceptor end of tRNA(Asp). In Bacteroides fragilis (strain YCH46), this protein is Aspartate--tRNA ligase.